The chain runs to 258 residues: Imidazole glycerol phosphate synthase subunit HisF (258 aa).

Active-site residues include D11 and D130.

The protein belongs to the HisA/HisF family. As to quaternary structure, heterodimer of HisH and HisF.

It is found in the cytoplasm. It catalyses the reaction 5-[(5-phospho-1-deoxy-D-ribulos-1-ylimino)methylamino]-1-(5-phospho-beta-D-ribosyl)imidazole-4-carboxamide + L-glutamine = D-erythro-1-(imidazol-4-yl)glycerol 3-phosphate + 5-amino-1-(5-phospho-beta-D-ribosyl)imidazole-4-carboxamide + L-glutamate + H(+). The protein operates within amino-acid biosynthesis; L-histidine biosynthesis; L-histidine from 5-phospho-alpha-D-ribose 1-diphosphate: step 5/9. IGPS catalyzes the conversion of PRFAR and glutamine to IGP, AICAR and glutamate. The HisF subunit catalyzes the cyclization activity that produces IGP and AICAR from PRFAR using the ammonia provided by the HisH subunit. The protein is Imidazole glycerol phosphate synthase subunit HisF of Shigella boydii serotype 18 (strain CDC 3083-94 / BS512).